A 543-amino-acid chain; its full sequence is Rop guanine nucleotide exchange factor 11 (543 aa).

Residues 61–89 (QPGKCGSVDRPSLPIGGVTPNRNDKLPRV) are disordered. In terms of domain architecture, PRONE spans 95–456 (MEALIILQAA…QLTQEPTNNA (362 aa)).

In terms of assembly, interacts with ARAC4/ROP2, ARAC3/ROP, ARAC9/ROP8, PHYA and PHYB. Highly expressed in elongating regions of roots and pollen grains. Expressed in flowers, and at lower levels in leaves and stems.

The protein localises to the cytoplasm. Its function is as follows. Guanine-nucleotide exchange factor (GEF) that acts as an activator of Rop (Rho of plants) GTPases by promoting the exchange of GDP for GTP. Functions as a light-signaling switch that functions in root growth and development through the activation of Rop in a phytochrome-dependent manner. May act as a negative regulator of phytochrome-mediated primary root development. The chain is Rop guanine nucleotide exchange factor 11 (ROPGEF11) from Arabidopsis thaliana (Mouse-ear cress).